The sequence spans 172 residues: Adenine phosphoribosyltransferase (172 aa).

The protein belongs to the purine/pyrimidine phosphoribosyltransferase family. In terms of assembly, homodimer.

It is found in the cytoplasm. The enzyme catalyses AMP + diphosphate = 5-phospho-alpha-D-ribose 1-diphosphate + adenine. The protein operates within purine metabolism; AMP biosynthesis via salvage pathway; AMP from adenine: step 1/1. Its function is as follows. Catalyzes a salvage reaction resulting in the formation of AMP, that is energically less costly than de novo synthesis. The chain is Adenine phosphoribosyltransferase from Prochlorococcus marinus (strain MIT 9303).